Here is a 474-residue protein sequence, read N- to C-terminus: MAKNNLGTITQVTGAVVDVKFEGELPSILSALETDNHGNRLVLEVAQHLGESVVRTIAMDSTEGLVRGQQVTSTGGPITVPVGPQVLGRIMNVIGEPVDERGPVVTAQRYPIHRQAPTFAEQATETEILVTGIKVIDLIAPYTKGGKVGLFGGAGVGKTVLIQELINNVAKGHGGYSVFAGVGERTREGNDLYHEMIDAGIIDLEGDKSKVALVYGQMNEPPGARARVALAGLTQAEYFRDEEGQDVLFFVDNIFRFTQAGSEVSALLGRIPSAVGYQPTLATDMGALQERITSTKKGSITSVQAIYVPADDLTDPAPAASFAHLDATTTLNRSIAELGIYPAVDPLDSTSRALDPLVVGEEHYKVAREVQRVLQTYKSLQDIIAILGMDELSEEDRLVVARARKIQRFLSQPFHVAEVFTGSPGKLVSLEDTIKGFKGLVEGEYDHLPEQAFYMVGNMAEAIEKAKKMAAEAA.

Residue 152–159 coordinates ATP; that stretch reads GGAGVGKT.

It belongs to the ATPase alpha/beta chains family. In terms of assembly, F-type ATPases have 2 components, CF(1) - the catalytic core - and CF(0) - the membrane proton channel. CF(1) has five subunits: alpha(3), beta(3), gamma(1), delta(1), epsilon(1). CF(0) has four main subunits: a(1), b(1), b'(1) and c(9-12).

It localises to the cell inner membrane. It carries out the reaction ATP + H2O + 4 H(+)(in) = ADP + phosphate + 5 H(+)(out). In terms of biological role, produces ATP from ADP in the presence of a proton gradient across the membrane. The catalytic sites are hosted primarily by the beta subunits. The polypeptide is ATP synthase subunit beta (Rhodospirillum rubrum (strain ATCC 11170 / ATH 1.1.1 / DSM 467 / LMG 4362 / NCIMB 8255 / S1)).